The primary structure comprises 108 residues: Glutaredoxin-1 (108 aa).

Residues 3-106 (EEFVQQRLAN…DILSSIGVLR (104 aa)) form the Glutaredoxin domain. An intrachain disulfide couples cysteine 23 to cysteine 26.

Belongs to the glutaredoxin family.

Its subcellular location is the virion. In terms of biological role, has thioltransferase and dehydroascorbate reductase activities. The chain is Glutaredoxin-1 (OPG075) from Ectromelia virus (strain Moscow) (ECTV).